A 527-amino-acid chain; its full sequence is Zinc finger protein 35 (527 aa).

The interval 9–221 (MALAPWGPVK…NPKTQLGQKP (213 aa)) is globular domain. Positions 16-38 (PVKVKKEEEEEENFPGQASSQQV) are disordered. Residues K20, K21, K99, K117, K125, K144, K158, K189, and K214 each participate in a glycyl lysine isopeptide (Lys-Gly) (interchain with G-Cter in SUMO2) cross-link. 2 consecutive C2H2-type zinc fingers follow at residues 222 to 244 (FTCSVCGKGFSQSANLVVHQRIH) and 250 to 272 (FECHECGKAFIQSANLVVHQRIH). K276 is covalently cross-linked (Glycyl lysine isopeptide (Lys-Gly) (interchain with G-Cter in SUMO2)). 9 consecutive C2H2-type zinc fingers follow at residues 278–300 (YVCSKCGKAFTQSSNLTVHQKIH), 306–328 (FKCNECEKAFSYSSQLARHQKVH), 334–356 (YECNECGKTFTRSSNLIVHQRIH), 362–384 (FACNDCGKAFTQSANLIVHQRSH), 390–412 (YECKECGKAFSCFSHLIVHQRIH), 418–440 (YDCSECGKAFSQLSCLIVHQRIH), 446–468 (YVCNECGKAFTCSSYLLIHQRIH), 474–496 (YTCNECGKAFRQRSSLTVHQRTH), and 502–524 (YECEKCGAAFISNSHLMRHHRTH).

It belongs to the krueppel C2H2-type zinc-finger protein family.

It is found in the nucleus. Its function is as follows. May be involved in transcriptional regulation. Involved in cell differentiation and/or proliferation. The chain is Zinc finger protein 35 (ZNF35) from Homo sapiens (Human).